We begin with the raw amino-acid sequence, 276 residues long: Exosome complex component RRP43 (276 aa).

The residue at position 2 (A2) is an N-acetylalanine.

It belongs to the RNase PH family. Component of the RNA exosome core complex (Exo-9), composed of EXOSC1, EXOSC2, EXOSC3, EXOSC4, EXOSC5, EXOSC6, EXOSC7, EXOSC8 and EXOSC9; within the complex interacts with EXOSC5 and EXOSC6. The catalytically inactive RNA exosome core complex (Exo-9) associates with the catalytic subunit EXOSC10/RRP6. Exo-9 may associate with DIS3 to form the nucleolar exosome complex, or DIS3L to form the cytoplasmic exosome complex. Exo-9 is formed by a hexameric base ring consisting of the heterodimers EXOSC4-EXOSC9, EXOSC5-EXOSC8 and EXOSC6-EXOSC7, and a cap ring consisting of EXOSC1, EXOSC2 and EXOSC3. The RNA exosome complex associates with cofactors C1D/RRP47, MPHOSPH6/MPP6 and MTREX/MTR4. Binds outer membrane protein opap from Neisseria gonorrhoeae.

It is found in the cytoplasm. The protein resides in the nucleus. The protein localises to the nucleolus. Functionally, non-catalytic component of the RNA exosome complex which has 3'-&gt;5' exoribonuclease activity and participates in a multitude of cellular RNA processing and degradation events. In the nucleus, the RNA exosome complex is involved in proper maturation of stable RNA species such as rRNA, snRNA and snoRNA, in the elimination of RNA processing by-products and non-coding 'pervasive' transcripts, such as antisense RNA species and promoter-upstream transcripts (PROMPTs), and of mRNAs with processing defects, thereby limiting or excluding their export to the cytoplasm. The RNA exosome may be involved in Ig class switch recombination (CSR) and/or Ig variable region somatic hypermutation (SHM) by targeting AICDA deamination activity to transcribed dsDNA substrates. In the cytoplasm, the RNA exosome complex is involved in general mRNA turnover and specifically degrades inherently unstable mRNAs containing AU-rich elements (AREs) within their 3' untranslated regions, and in RNA surveillance pathways, preventing translation of aberrant mRNAs. It seems to be involved in degradation of histone mRNA. The catalytic inactive RNA exosome core complex of 9 subunits (Exo-9) is proposed to play a pivotal role in the binding and presentation of RNA for ribonucleolysis, and to serve as a scaffold for the association with catalytic subunits and accessory proteins or complexes. EXOSC8 binds to ARE-containing RNAs. The protein is Exosome complex component RRP43 (EXOSC8) of Homo sapiens (Human).